Here is a 3680-residue protein sequence, read N- to C-terminus: Dystrophin (3680 aa).

Residues 1–237 (MLWWEEVEDC…ILMYITSLFQ (237 aa)) are actin-binding. 2 Calponin-homology (CH) domains span residues 15 to 119 (DVQK…LHWQ) and 134 to 240 (TNSE…QVLP). The ANK2- and ANK-3 binding stretch occupies residues 63–72 (PKEKGSTRVH). Over residues 310-323 (TSDPTRSPLPSQHL) the composition is skewed to polar residues. The disordered stretch occupies residues 310 to 332 (TSDPTRSPLPSQHLETPEDKSFG). Spectrin repeat units lie at residues 340 to 448 (ANLD…NLHK), 449 to 557 (VLMD…LLQD), 560 to 668 (LKWQ…QISQ), 720 to 829 (EIRK…WLEY), 831 to 935 (NNII…ELQT), 944 to 1047 (RYQE…KLEE), 1050 to 1156 (AKLR…ALKG), 1159 to 1265 (DKTV…TLEE), 1268 to 1369 (ACWH…LLEQ), 1370 to 1465 (SIQS…LFQK), 1470 to 1570 (EQRL…QLEK), 1573 to 1678 (KLSR…LLLE), 1681 to 1780 (KHME…KASI), 1781 to 1876 (PLKE…KALE), 1879 to 1981 (HQWY…TVHE), 1994 to 2103 (EISY…RFDR), 2106 to 2210 (EKWR…RLEE), 2213 to 2320 (NILS…EIEA), 2321 to 2418 (HVKD…LRAK), 2470 to 2572 (FNRA…QLTE), 2575 to 2681 (KDST…ALEE), 2684 to 2797 (RLLQ…HLEA), 2803 to 2925 (KRLH…RKID), and 2930 to 3035 (RLQE…QLHE). The interaction with SYNM stretch occupies residues 1418–1915 (DLTSHEISLE…PEPRDERKIK (498 aa)). The region spanning 3050–3083 (TSVQGPWERAISPNKVPYYINHETQTTCWDHPKM) is the WW domain. Positions 3053 to 3403 (QGPWERAISP…TVLEGDNMET (351 aa)) are interaction with SYNM. Residues 3303–3359 (KHQAKCNICKECPIIGFRYRSLKHFNYDICQSCFFSGRVAKGHKMHYPMVEYCTPTT) form a ZZ-type; degenerate zinc finger. Zn(2+) contacts are provided by Cys-3308, Cys-3311, Cys-3332, and Cys-3335. A binds to SNTB1 region spans residues 3461-3513 (DDEHLLIQHYWRSLNQESPLSQPRSPAQILISLESEERGELERILADLEGRNR). Ser-3478, Ser-3485, and Ser-3495 each carry phosphoserine. 2 disordered regions span residues 3524–3549 (QQHE…QSPR) and 3595–3680 (PQAE…EDTM). 2 stretches are compositionally biased toward polar residues: residues 3602-3621 (NGTT…SSQP) and 3658-3668 (LNHSFPSSRGR). Residues Ser-3607, Ser-3608, Ser-3612, Ser-3618, Ser-3619, and Ser-3661 each carry the phosphoserine modification.

In terms of assembly, interacts with SYNM. Interacts with the syntrophins SNTG1 and SNTG2. Interacts with KRT19. Component of the dystrophin-associated glycoprotein complex which is composed of three subcomplexes: a cytoplasmic complex comprised of DMD (or UTRN), DTNA and a number of syntrophins, such as SNTB1, SNTB2, SNTG1 and SNTG2, the transmembrane dystroglycan complex, and the sarcoglycan-sarcospan complex. Interacts with DAG1 (betaDAG1) with DMD; the interaction is inhibited by phosphorylation on the PPXY motif of DAG1. Interacts with SYNM; SNTA1 and SNTB1. Interacts with CMYA5. Directly interacts with ANK2 and ANK3; these interactions do not interfere with betaDAG1-binding and are necessary for proper localization in muscle cells. Identified in a dystroglycan complex that contains at least PRX, DRP2, UTRN, DMD and DAG1. Interacts with DTNB. Interacts with PGM5; the interaction is direct. Interacts with NOS1; localizes NOS1 to sarcolemma in muscle cells.

The protein resides in the cell membrane. Its subcellular location is the sarcolemma. It localises to the cytoplasm. It is found in the cytoskeleton. The protein localises to the postsynaptic cell membrane. Its function is as follows. Anchors the extracellular matrix to the cytoskeleton via F-actin. Ligand for dystroglycan. Component of the dystrophin-associated glycoprotein complex which accumulates at the neuromuscular junction (NMJ) and at a variety of synapses in the peripheral and central nervous systems and has a structural function in stabilizing the sarcolemma. Also implicated in signaling events and synaptic transmission. The polypeptide is Dystrophin (DMD) (Canis lupus familiaris (Dog)).